Consider the following 217-residue polypeptide: Glycosylphosphatidylinositol anchor biosynthesis protein 11 (217 aa).

The next 2 membrane-spanning stretches (helical) occupy residues 45–65 and 68–88; these read TWLT…KVFN and NTAE…IFQF. Asn-102 carries N-linked (GlcNAc...) asparagine glycosylation. 4 helical membrane-spanning segments follow: residues 107–127, 134–154, 169–189, and 197–217; these read AISI…IILF, LLWE…PAVY, YFIL…LDWD, and IPIV…GAYL.

This sequence belongs to the PIGF family.

The protein resides in the endoplasmic reticulum membrane. It functions in the pathway glycolipid biosynthesis; glycosylphosphatidylinositol-anchor biosynthesis. Acts in the GPI biosynthetic pathway between GlcNAc-PI synthesis and GPI transfer to protein. This is Glycosylphosphatidylinositol anchor biosynthesis protein 11 (GPI11) from Candida glabrata (strain ATCC 2001 / BCRC 20586 / JCM 3761 / NBRC 0622 / NRRL Y-65 / CBS 138) (Yeast).